The chain runs to 371 residues: Alanine dehydrogenase (371 aa).

Substrate is bound by residues Arg15 and Lys75. Residue His96 is the Proton donor/acceptor of the active site. Residues Ser134, 178-179, Asp198, Lys203, Ser220, 239-240, 267-270, Arg279, and 298-301 each bind NAD(+); these read TA, VL, IAID, and VANM. Asp270 acts as the Proton donor/acceptor in catalysis. Mg(2+)-binding residues include Glu323 and His327.

It belongs to the AlaDH/PNT family. In terms of assembly, homohexamer. Trimer of dimers. Mg(2+) serves as cofactor.

The protein localises to the secreted. It carries out the reaction L-alanine + NAD(+) + H2O = pyruvate + NH4(+) + NADH + H(+). Its pathway is amino-acid degradation; L-alanine degradation via dehydrogenase pathway; NH(3) and pyruvate from L-alanine: step 1/1. In terms of biological role, catalyzes the reversible reductive amination of pyruvate to L-alanine. However, since the physiological environment of M.tuberculosis has a neutral pH, it can be assumed that the enzyme catalyzes exclusively the formation of L-alanine. May play a role in cell wall synthesis as L-alanine is an important constituent of the peptidoglycan layer. In Mycobacterium tuberculosis (strain CDC 1551 / Oshkosh), this protein is Alanine dehydrogenase (ald).